Consider the following 60-residue polypeptide: Mannitol-specific phosphotransferase enzyme IIA component (60 aa).

Positions 2-60 (SELFSNDNIFLNVNVNSQNEAIEKAGKALVDSGAVTDAYIQVVSTFMGNGLAIPHGTDD) constitute a PTS EIIA type-2 domain. The Tele-phosphohistidine intermediate role is filled by H56. The residue at position 56 (H56) is a Phosphohistidine; by HPr.

In terms of assembly, homodimer or homotrimer. Seems to be a monomer when not phosphorylated.

It localises to the cytoplasm. Its function is as follows. The phosphoenolpyruvate-dependent sugar phosphotransferase system (sugar PTS), a major carbohydrate active transport system, catalyzes the phosphorylation of incoming sugar substrates concomitantly with their translocation across the cell membrane. The enzyme II CmtAB PTS system is involved in D-mannitol transport. The sequence is that of Mannitol-specific phosphotransferase enzyme IIA component from Staphylococcus aureus.